A 208-amino-acid polypeptide reads, in one-letter code: GTP cyclohydrolase 1 (208 aa).

Cysteine 98, histidine 101, and cysteine 169 together coordinate Zn(2+).

This sequence belongs to the GTP cyclohydrolase I family. Toroid-shaped homodecamer, composed of two pentamers of five dimers.

The enzyme catalyses GTP + H2O = 7,8-dihydroneopterin 3'-triphosphate + formate + H(+). It functions in the pathway cofactor biosynthesis; 7,8-dihydroneopterin triphosphate biosynthesis; 7,8-dihydroneopterin triphosphate from GTP: step 1/1. The protein is GTP cyclohydrolase 1 of Agrobacterium fabrum (strain C58 / ATCC 33970) (Agrobacterium tumefaciens (strain C58)).